Reading from the N-terminus, the 923-residue chain is DNA gyrase subunit A (923 aa).

Positions 34 to 534 (LPDARDGLKP…SQVDLTIADL (501 aa)) constitute a Topo IIA-type catalytic domain. Tyrosine 122 acts as the O-(5'-phospho-DNA)-tyrosine intermediate in catalysis. The GyrA-box motif lies at 561–567 (QRRGGKG). Positions 881 to 923 (ERVQEPSGGDDEDLPEGEEAAESLGESAESESEPAAEAEGNEE) are disordered. Composition is skewed to acidic residues over residues 888 to 901 (GGDDEDLPEGEEAA) and 908 to 923 (AESESEPAAEAEGNEE).

The protein belongs to the type II topoisomerase GyrA/ParC subunit family. Heterotetramer, composed of two GyrA and two GyrB chains. In the heterotetramer, GyrA contains the active site tyrosine that forms a transient covalent intermediate with DNA, while GyrB binds cofactors and catalyzes ATP hydrolysis.

Its subcellular location is the cytoplasm. The catalysed reaction is ATP-dependent breakage, passage and rejoining of double-stranded DNA.. Functionally, a type II topoisomerase that negatively supercoils closed circular double-stranded (ds) DNA in an ATP-dependent manner to modulate DNA topology and maintain chromosomes in an underwound state. Negative supercoiling favors strand separation, and DNA replication, transcription, recombination and repair, all of which involve strand separation. Also able to catalyze the interconversion of other topological isomers of dsDNA rings, including catenanes and knotted rings. Type II topoisomerases break and join 2 DNA strands simultaneously in an ATP-dependent manner. The chain is DNA gyrase subunit A from Pseudomonas aeruginosa (strain ATCC 15692 / DSM 22644 / CIP 104116 / JCM 14847 / LMG 12228 / 1C / PRS 101 / PAO1).